The chain runs to 222 residues: N-(5'-phosphoribosyl)anthranilate isomerase (222 aa).

The protein belongs to the TrpF family.

It carries out the reaction N-(5-phospho-beta-D-ribosyl)anthranilate = 1-(2-carboxyphenylamino)-1-deoxy-D-ribulose 5-phosphate. It participates in amino-acid biosynthesis; L-tryptophan biosynthesis; L-tryptophan from chorismate: step 3/5. This is N-(5'-phosphoribosyl)anthranilate isomerase from Prosthecochloris aestuarii (strain DSM 271 / SK 413).